We begin with the raw amino-acid sequence, 345 residues long: Myb/SANT-like DNA-binding domain-containing protein 4 (345 aa).

A Myb-like domain is found at L4 to R77. K9 is covalently cross-linked (Glycyl lysine isopeptide (Lys-Gly) (interchain with G-Cter in SUMO2)). S106 carries the phosphoserine modification. Glycyl lysine isopeptide (Lys-Gly) (interchain with G-Cter in SUMO2) cross-links involve residues K114 and K142. The tract at residues V141 to N175 is disordered. T188 carries the post-translational modification Phosphothreonine. Residues H202–L344 adopt a coiled-coil conformation. Glycyl lysine isopeptide (Lys-Gly) (interchain with G-Cter in SUMO2) cross-links involve residues K237, K254, and K273.

In Rattus norvegicus (Rat), this protein is Myb/SANT-like DNA-binding domain-containing protein 4 (Msantd4).